The sequence spans 97 residues: Protein 9b (97 aa).

The 9b domain occupies 8-97 (VPPALHLVDP…PDEFVVVTAK (90 aa)).

Homodimer.

Its subcellular location is the host cytoplasmic vesicle membrane. The protein localises to the host cytoplasm. This chain is Protein 9b, found in Bat coronavirus 279/2005 (BtCoV).